The chain runs to 274 residues: NH(3)-dependent NAD(+) synthetase (274 aa).

46 to 53 is a binding site for ATP; the sequence is GISGGQDS. Position 52 (D52) interacts with Mg(2+). R140 is a binding site for deamido-NAD(+). T160 is an ATP binding site. E165 is a Mg(2+) binding site. The deamido-NAD(+) site is built by K173 and D180. ATP-binding residues include K189 and T211. 260–261 is a binding site for deamido-NAD(+); the sequence is HK.

This sequence belongs to the NAD synthetase family. As to quaternary structure, homodimer.

It carries out the reaction deamido-NAD(+) + NH4(+) + ATP = AMP + diphosphate + NAD(+) + H(+). It participates in cofactor biosynthesis; NAD(+) biosynthesis; NAD(+) from deamido-NAD(+) (ammonia route): step 1/1. Functionally, catalyzes the ATP-dependent amidation of deamido-NAD to form NAD. Uses ammonia as a nitrogen source. The chain is NH(3)-dependent NAD(+) synthetase from Listeria monocytogenes serotype 4b (strain CLIP80459).